Reading from the N-terminus, the 283-residue chain is Bifunctional protein FolD (283 aa).

Residues 164 to 166 (GRS), Ser-189, and Ile-230 contribute to the NADP(+) site.

This sequence belongs to the tetrahydrofolate dehydrogenase/cyclohydrolase family. In terms of assembly, homodimer.

It carries out the reaction (6R)-5,10-methylene-5,6,7,8-tetrahydrofolate + NADP(+) = (6R)-5,10-methenyltetrahydrofolate + NADPH. The catalysed reaction is (6R)-5,10-methenyltetrahydrofolate + H2O = (6R)-10-formyltetrahydrofolate + H(+). It participates in one-carbon metabolism; tetrahydrofolate interconversion. Catalyzes the oxidation of 5,10-methylenetetrahydrofolate to 5,10-methenyltetrahydrofolate and then the hydrolysis of 5,10-methenyltetrahydrofolate to 10-formyltetrahydrofolate. The sequence is that of Bifunctional protein FolD from Lactobacillus delbrueckii subsp. bulgaricus (strain ATCC 11842 / DSM 20081 / BCRC 10696 / JCM 1002 / NBRC 13953 / NCIMB 11778 / NCTC 12712 / WDCM 00102 / Lb 14).